A 700-amino-acid chain; its full sequence is Glycine--tRNA ligase beta subunit (700 aa).

Belongs to the class-II aminoacyl-tRNA synthetase family. Tetramer of two alpha and two beta subunits.

The protein resides in the cytoplasm. It carries out the reaction tRNA(Gly) + glycine + ATP = glycyl-tRNA(Gly) + AMP + diphosphate. This Janthinobacterium sp. (strain Marseille) (Minibacterium massiliensis) protein is Glycine--tRNA ligase beta subunit.